Here is a 509-residue protein sequence, read N- to C-terminus: Bifunctional purine biosynthesis protein PurH (509 aa).

Residues 1–144 (MKRALISVSD…KNYAAVTVVV (144 aa)) form the MGS-like domain.

This sequence belongs to the PurH family.

It carries out the reaction (6R)-10-formyltetrahydrofolate + 5-amino-1-(5-phospho-beta-D-ribosyl)imidazole-4-carboxamide = 5-formamido-1-(5-phospho-D-ribosyl)imidazole-4-carboxamide + (6S)-5,6,7,8-tetrahydrofolate. It catalyses the reaction IMP + H2O = 5-formamido-1-(5-phospho-D-ribosyl)imidazole-4-carboxamide. It participates in purine metabolism; IMP biosynthesis via de novo pathway; 5-formamido-1-(5-phospho-D-ribosyl)imidazole-4-carboxamide from 5-amino-1-(5-phospho-D-ribosyl)imidazole-4-carboxamide (10-formyl THF route): step 1/1. Its pathway is purine metabolism; IMP biosynthesis via de novo pathway; IMP from 5-formamido-1-(5-phospho-D-ribosyl)imidazole-4-carboxamide: step 1/1. The polypeptide is Bifunctional purine biosynthesis protein PurH (Listeria monocytogenes serovar 1/2a (strain ATCC BAA-679 / EGD-e)).